The following is a 703-amino-acid chain: tRNA 5-methylaminomethyl-2-thiouridine biosynthesis bifunctional protein MnmC (703 aa).

The interval 1-281 (MTAKPQKSCQ…KPAALVAKDH (281 aa)) is tRNA (mnm(5)s(2)U34)-methyltransferase. The tract at residues 286-703 (VGGGLASANL…LRKLLKGKAL (418 aa)) is FAD-dependent cmnm(5)s(2)U34 oxidoreductase.

In the N-terminal section; belongs to the methyltransferase superfamily. tRNA (mnm(5)s(2)U34)-methyltransferase family. This sequence in the C-terminal section; belongs to the DAO family. The cofactor is FAD.

The protein localises to the cytoplasm. It carries out the reaction 5-aminomethyl-2-thiouridine(34) in tRNA + S-adenosyl-L-methionine = 5-methylaminomethyl-2-thiouridine(34) in tRNA + S-adenosyl-L-homocysteine + H(+). In terms of biological role, catalyzes the last two steps in the biosynthesis of 5-methylaminomethyl-2-thiouridine (mnm(5)s(2)U) at the wobble position (U34) in tRNA. Catalyzes the FAD-dependent demodification of cmnm(5)s(2)U34 to nm(5)s(2)U34, followed by the transfer of a methyl group from S-adenosyl-L-methionine to nm(5)s(2)U34, to form mnm(5)s(2)U34. The chain is tRNA 5-methylaminomethyl-2-thiouridine biosynthesis bifunctional protein MnmC from Shewanella sp. (strain MR-7).